Here is a 71-residue protein sequence, read N- to C-terminus: Mitochondrial import protein 1 (71 aa).

Residues Tyr-22 to Ala-44 form a helical membrane-spanning segment.

It belongs to the MIM1 family. As to quaternary structure, component of the mitochondrial outer import machinery (MIM) complex containing at least mim1 and mim2. Interacts with mim2. Interacts with mitophagy receptor atg43.

It localises to the mitochondrion outer membrane. Its function is as follows. Component of the mitochondrial outer import machinery (MIM) complex that mediates transport of proteins into mitochondrial compartments. Promotes the insertion of tom70 into the outer mitochondrial membrane. Promotes the insertion of atg43 into the outer mitochondrial membrane. The MIM complex cooperates with the receptor tom70 in binding of precursor proteins and promotes their insertion and assembly into the outer membrane. Involved in import of the subset of proteins with multiple alpha-helical transmembrane segments. Required for the assembly of the TOM (translocase of outer membrane) receptor complex, which is responsible for the recognition and translocation of cytosolically synthesized mitochondrial preproteins. This Schizosaccharomyces pombe (strain 972 / ATCC 24843) (Fission yeast) protein is Mitochondrial import protein 1.